Here is a 102-residue protein sequence, read N- to C-terminus: Protein translation factor SUI1 homolog (102 aa).

This sequence belongs to the SUI1 family.

This chain is Protein translation factor SUI1 homolog, found in Cenarchaeum symbiosum (strain A).